The primary structure comprises 100 residues: Urease subunit gamma (100 aa).

It belongs to the urease gamma subunit family. As to quaternary structure, heterotrimer of UreA (gamma), UreB (beta) and UreC (alpha) subunits. Three heterotrimers associate to form the active enzyme.

It localises to the cytoplasm. The enzyme catalyses urea + 2 H2O + H(+) = hydrogencarbonate + 2 NH4(+). It participates in nitrogen metabolism; urea degradation; CO(2) and NH(3) from urea (urease route): step 1/1. This Herpetosiphon aurantiacus (strain ATCC 23779 / DSM 785 / 114-95) protein is Urease subunit gamma.